A 707-amino-acid polypeptide reads, in one-letter code: Elongation factor G (707 aa).

The tr-type G domain maps to 8-290 (ERYRNIGICA…AVIEYLPSPT (283 aa)). Residues 17-24 (AHVDAGKT), 88-92 (DTPGH), and 142-145 (NKMD) each bind GTP.

Belongs to the TRAFAC class translation factor GTPase superfamily. Classic translation factor GTPase family. EF-G/EF-2 subfamily.

It localises to the cytoplasm. In terms of biological role, catalyzes the GTP-dependent ribosomal translocation step during translation elongation. During this step, the ribosome changes from the pre-translocational (PRE) to the post-translocational (POST) state as the newly formed A-site-bound peptidyl-tRNA and P-site-bound deacylated tRNA move to the P and E sites, respectively. Catalyzes the coordinated movement of the two tRNA molecules, the mRNA and conformational changes in the ribosome. This chain is Elongation factor G, found in Idiomarina loihiensis (strain ATCC BAA-735 / DSM 15497 / L2-TR).